Here is a 113-residue protein sequence, read N- to C-terminus: Large ribosomal subunit protein bL17 (113 aa).

This sequence belongs to the bacterial ribosomal protein bL17 family. Part of the 50S ribosomal subunit. Contacts protein L32.

This Clostridium botulinum (strain Loch Maree / Type A3) protein is Large ribosomal subunit protein bL17.